A 217-amino-acid chain; its full sequence is Flagellar L-ring protein 2 (217 aa).

A signal peptide spans 1 to 15 (MRILLALTWLAWLGA). Cys16 carries N-palmitoyl cysteine lipidation. Cys16 is lipidated: S-diacylglycerol cysteine.

The protein belongs to the FlgH family. In terms of assembly, the basal body constitutes a major portion of the flagellar organelle and consists of four rings (L,P,S, and M) mounted on a central rod.

It is found in the cell outer membrane. The protein localises to the bacterial flagellum basal body. Assembles around the rod to form the L-ring and probably protects the motor/basal body from shearing forces during rotation. The polypeptide is Flagellar L-ring protein 2 (Burkholderia thailandensis (strain ATCC 700388 / DSM 13276 / CCUG 48851 / CIP 106301 / E264)).